Here is a 175-residue protein sequence, read N- to C-terminus: Methylated-DNA--protein-cysteine methyltransferase (175 aa).

C142 (nucleophile; methyl group acceptor) is an active-site residue.

Belongs to the MGMT family.

It is found in the cytoplasm. The catalysed reaction is a 6-O-methyl-2'-deoxyguanosine in DNA + L-cysteinyl-[protein] = S-methyl-L-cysteinyl-[protein] + a 2'-deoxyguanosine in DNA. It carries out the reaction a 4-O-methyl-thymidine in DNA + L-cysteinyl-[protein] = a thymidine in DNA + S-methyl-L-cysteinyl-[protein]. Involved in the cellular defense against the biological effects of O6-methylguanine (O6-MeG) and O4-methylthymine (O4-MeT) in DNA. Repairs the methylated nucleobase in DNA by stoichiometrically transferring the methyl group to a cysteine residue in the enzyme. This is a suicide reaction: the enzyme is irreversibly inactivated. The sequence is that of Methylated-DNA--protein-cysteine methyltransferase from Thermococcus sibiricus (strain DSM 12597 / MM 739).